A 315-amino-acid polypeptide reads, in one-letter code: Methionyl-tRNA formyltransferase (315 aa).

A (6S)-5,6,7,8-tetrahydrofolate-binding site is contributed by 110–113 (SLLP).

This sequence belongs to the Fmt family.

It catalyses the reaction L-methionyl-tRNA(fMet) + (6R)-10-formyltetrahydrofolate = N-formyl-L-methionyl-tRNA(fMet) + (6S)-5,6,7,8-tetrahydrofolate + H(+). Functionally, attaches a formyl group to the free amino group of methionyl-tRNA(fMet). The formyl group appears to play a dual role in the initiator identity of N-formylmethionyl-tRNA by promoting its recognition by IF2 and preventing the misappropriation of this tRNA by the elongation apparatus. The polypeptide is Methionyl-tRNA formyltransferase (Lactobacillus delbrueckii subsp. bulgaricus (strain ATCC BAA-365 / Lb-18)).